The primary structure comprises 224 residues: MQHPAFYVTGTDTGIGKTMGSTALLHALRARGHRAVGMKPVASGCEHTPQGWRNEDALALQAASDPQPDYATLNPYALPAPLAPELAAADVGVTLALEPIAHAFAQLLTQAEVVVVEGVGGWAAPLSATLDQADLVRALQLPVVLVVGVRLGCINHARLTAAAIAADGLQCIGWIANEIDPQMERIEENIGMLRQRLAMPCWGRIPWRPGADAAAQAHGLQLPR.

Thr-18 contacts Mg(2+). Residue Lys-39 is part of the active site. Substrate is bound at residue Ser-43. Residues Asp-56 and Glu-117 each coordinate Mg(2+). ATP is bound by residues Asp-56, 117 to 120, and 177 to 178; these read EGVG and NE.

It belongs to the dethiobiotin synthetase family. Homodimer. Mg(2+) serves as cofactor.

The protein localises to the cytoplasm. It carries out the reaction (7R,8S)-7,8-diammoniononanoate + CO2 + ATP = (4R,5S)-dethiobiotin + ADP + phosphate + 3 H(+). It participates in cofactor biosynthesis; biotin biosynthesis; biotin from 7,8-diaminononanoate: step 1/2. Its function is as follows. Catalyzes a mechanistically unusual reaction, the ATP-dependent insertion of CO2 between the N7 and N8 nitrogen atoms of 7,8-diaminopelargonic acid (DAPA, also called 7,8-diammoniononanoate) to form a ureido ring. The protein is ATP-dependent dethiobiotin synthetase BioD of Xanthomonas euvesicatoria pv. vesicatoria (strain 85-10) (Xanthomonas campestris pv. vesicatoria).